The following is a 190-amino-acid chain: Glutamyl-tRNA(Gln) amidotransferase subunit F, mitochondrial (190 aa).

This sequence belongs to the GatF family. As to quaternary structure, subunit of the heterotrimeric GatFAB amidotransferase (AdT) complex, composed of A, B and F subunits.

The protein localises to the mitochondrion inner membrane. It catalyses the reaction L-glutamyl-tRNA(Gln) + L-glutamine + ATP + H2O = L-glutaminyl-tRNA(Gln) + L-glutamate + ADP + phosphate + H(+). Functionally, allows the formation of correctly charged Gln-tRNA(Gln) through the transamidation of misacylated Glu-tRNA(Gln) in the mitochondria. The reaction takes place in the presence of glutamine and ATP through an activated gamma-phospho-Glu-tRNA(Gln). Required for proper protein synthesis within the mitochondrion. This chain is Glutamyl-tRNA(Gln) amidotransferase subunit F, mitochondrial, found in Eremothecium gossypii (strain ATCC 10895 / CBS 109.51 / FGSC 9923 / NRRL Y-1056) (Yeast).